The chain runs to 260 residues: Neuraminyllactose-binding hemagglutinin (260 aa).

An N-terminal signal peptide occupies residues 1 to 27 (MKTNGHFKDFAWKKCLLGASVGALLVG). Cys-28 is lipidated: N-palmitoyl cysteine. Cys-28 carries S-diacylglycerol cysteine lipidation. Residues 134–139 (KRTIQK) form an N-acetyl-neuraminyl-alpha(2,3)-lactose binding motif region.

It localises to the cell outer membrane. The chain is Neuraminyllactose-binding hemagglutinin (hpaA) from Helicobacter pylori (Campylobacter pylori).